We begin with the raw amino-acid sequence, 482 residues long: G-protein coupled receptor 37-like 1 (482 aa).

The first 25 residues, 1–25 (MRWLWPLGVSLAVALAAGPERAPRG), serve as a signal peptide directing secretion. Disordered stretches follow at residues 25–56 (GVWL…AKGL) and 78–119 (PTQP…VQNP). Over 26 to 134 (VWLQQGGHQP…ERSYGAYAVL (109 aa)) the chain is Extracellular. A compositionally biased stretch (basic and acidic residues) spans 40 to 54 (QPDRSRRGAEREDAK). An N-linked (GlcNAc...) asparagine glycan is attached at Asn105. Residues 135-155 (LLALLLFAVGIVGSLAVMCIV) traverse the membrane as a helical segment. Residues 156-167 (WHSYYLKSAWNS) lie on the Cytoplasmic side of the membrane. The helical transmembrane segment at 168–188 (VLASLALWDFLVLFFCLPVVT) threads the bilayer. Residues 189–205 (FHEITKQRLLGAVSCRA) lie on the Extracellular side of the membrane. Cys203 and Cys286 are joined by a disulfide. Residues 206 to 226 (VPFVEVSSLGVTTFSLCALGI) form a helical membrane-spanning segment. Residues 227–251 (DRFHVATSTLPKARPIEPCPSILAK) are Cytoplasmic-facing. A helical transmembrane segment spans residues 252–272 (LAVIWVGSMTLAAPELLLWQL). Residues 273–310 (VREPSPAAGTVDTCIMKPSAHLPESLYSLVLTYQNARM) lie on the Extracellular side of the membrane. A helical membrane pass occupies residues 311-331 (WWSFGCYFCLPVLFTVTCQLV). At 332-361 (TWRVRGTPGRKPESRPGPQEPRGARPSSTV) the chain is on the cytoplasmic side. The tract at residues 338 to 358 (TPGRKPESRPGPQEPRGARPS) is disordered. The chain crosses the membrane as a helical span at residues 362-382 (AGLAAVHALCALPENVCNVVA). Residues 383–398 (AYLSAALTRQTLELLG) are Extracellular-facing. A helical transmembrane segment spans residues 399-419 (LVTQFSTFFKAALTPLLLLCV). The Cytoplasmic segment spans residues 420–482 (SRPLGRAFLD…PPLLALGTPC (63 aa)). Thr480 carries the phosphothreonine modification.

This sequence belongs to the G-protein coupled receptor 1 family. Interacts with the PTCH1 receptor. In terms of processing, undergoes metalloprotease-mediated cleavage which reduces its constitutive activity. Ubiquitinated.

It localises to the cell membrane. It is found in the cell projection. The protein resides in the cilium membrane. Functionally, G-protein coupled receptor. Has been shown to bind the neuroprotective and glioprotective factor prosaposin (PSAP), leading to endocytosis followed by an ERK phosphorylation cascade. However, other studies have shown that prosaposin does not increase activity. It has been suggested that GPR37L1 is a constitutively active receptor which signals through the guanine nucleotide-binding protein G(s) subunit alpha. Participates in the regulation of postnatal cerebellar development by modulating the Shh pathway. Regulates baseline blood pressure in females and protects against cardiovascular stress in males. Mediates inhibition of astrocyte glutamate transporters and reduction in neuronal N-methyl-D-aspartate receptor activity. The sequence is that of G-protein coupled receptor 37-like 1 (GPR37L1) from Bos taurus (Bovine).